Reading from the N-terminus, the 736-residue chain is Microtubule-associated protein mu-2 (736 aa).

It belongs to the orthoreovirus mu-2 protein family. Interacts with protein mu-NS; in viral inclusions. Interacts with polymerase lambda-3; this interaction stimulates the ATPase activity of mu-2. It depends on a divalent metal cation as a cofactor.

The protein resides in the virion. It localises to the host cytoplasm. The protein localises to the host cytoskeleton. Its function is as follows. Minor inner capsid (core) component. Displays NTPase and RNA 5'-triphosphatase (RTPase) activities. ATP is the preferred substrate for hydrolysis. May function as a cofactor of polymerase lambda-3. Associates with microtubules and plays a role in the formation, structural organization and morphology of viral inclusions, where the assembly of cores and the replication of viral RNA occur. Together with mu-NS, recruits the other core proteins to these inclusions. In Mammalia (T1L), this protein is Microtubule-associated protein mu-2 (M1).